The sequence spans 230 residues: Lactate utilization protein C (230 aa).

Belongs to the LutC/YkgG family.

Functionally, is involved in L-lactate degradation and allows cells to grow with lactate as the sole carbon source. The polypeptide is Lactate utilization protein C (Halalkalibacterium halodurans (strain ATCC BAA-125 / DSM 18197 / FERM 7344 / JCM 9153 / C-125) (Bacillus halodurans)).